Here is a 185-residue protein sequence, read N- to C-terminus: Ribosome-recycling factor (185 aa).

The protein belongs to the RRF family.

The protein resides in the cytoplasm. Its function is as follows. Responsible for the release of ribosomes from messenger RNA at the termination of protein biosynthesis. May increase the efficiency of translation by recycling ribosomes from one round of translation to another. In Corynebacterium urealyticum (strain ATCC 43042 / DSM 7109), this protein is Ribosome-recycling factor.